A 271-amino-acid polypeptide reads, in one-letter code: 4-hydroxy-tetrahydrodipicolinate reductase (271 aa).

Residues 11 to 16 and Glu-37 each bind NAD(+); that span reads GGSGRM. Arg-38 provides a ligand contact to NADP(+). NAD(+) is bound by residues 101-103 and 125-128; these read GTT and APNM. The active-site Proton donor/acceptor is the His-158. His-159 contributes to the (S)-2,3,4,5-tetrahydrodipicolinate binding site. Residue Lys-162 is the Proton donor of the active site. Residue 168 to 169 participates in (S)-2,3,4,5-tetrahydrodipicolinate binding; it reads GT.

It belongs to the DapB family.

It is found in the cytoplasm. It catalyses the reaction (S)-2,3,4,5-tetrahydrodipicolinate + NAD(+) + H2O = (2S,4S)-4-hydroxy-2,3,4,5-tetrahydrodipicolinate + NADH + H(+). The enzyme catalyses (S)-2,3,4,5-tetrahydrodipicolinate + NADP(+) + H2O = (2S,4S)-4-hydroxy-2,3,4,5-tetrahydrodipicolinate + NADPH + H(+). It participates in amino-acid biosynthesis; L-lysine biosynthesis via DAP pathway; (S)-tetrahydrodipicolinate from L-aspartate: step 4/4. Catalyzes the conversion of 4-hydroxy-tetrahydrodipicolinate (HTPA) to tetrahydrodipicolinate. This chain is 4-hydroxy-tetrahydrodipicolinate reductase, found in Shewanella piezotolerans (strain WP3 / JCM 13877).